The primary structure comprises 556 residues: Cholesterol oxidase (556 aa).

FAD is bound by residues G18, E37, G88, A93, and V235. H471 serves as the catalytic Proton acceptor. G504 is a binding site for FAD.

The protein belongs to the GMC oxidoreductase family. The cofactor is FAD.

The enzyme catalyses cholesterol + O2 = cholest-5-en-3-one + H2O2. The catalysed reaction is cholest-5-en-3-one = cholest-4-en-3-one. Its pathway is steroid metabolism; cholesterol degradation. Its function is as follows. Bifunctional enzyme that catalyzes the oxidation and isomerization of cholesterol to cholestenone (cholest-4-en-3-one), an initial step in the cholesterol degradation process. This Acinetobacter baumannii protein is Cholesterol oxidase.